A 256-amino-acid polypeptide reads, in one-letter code: Adenylate kinase (256 aa).

Residue 49 to 54 coordinates ATP; that stretch reads GAGKGT. Residues 69–98 are NMP; the sequence is ATGDMLREQVQQKTPLGIEAKKIMDAGGLV. AMP-binding positions include T70, R75, 96–98, 125–128, and Q132; these read GLV and GFPR. The LID stretch occupies residues 166-203; the sequence is GRLVHPASGRSYHKEFNPPKKRNVDDVTGEPLIQRSDD. Residues R167 and 176-177 contribute to the ATP site; that span reads SY. Residues R200 and R211 each coordinate AMP. Q239 contributes to the ATP binding site.

The protein belongs to the adenylate kinase family. AK2 subfamily. As to quaternary structure, monomer.

It localises to the cytoplasm. The protein resides in the cytosol. Its subcellular location is the mitochondrion intermembrane space. The catalysed reaction is AMP + ATP = 2 ADP. Its function is as follows. Catalyzes the reversible transfer of the terminal phosphate group between ATP and AMP. Plays an important role in cellular energy homeostasis and in adenine nucleotide metabolism. Adenylate kinase activity is critical for regulation of the phosphate utilization and the AMP de novo biosynthesis pathways. The polypeptide is Adenylate kinase (Laccaria bicolor (strain S238N-H82 / ATCC MYA-4686) (Bicoloured deceiver)).